We begin with the raw amino-acid sequence, 240 residues long: MTEQPPPGGSYPPPPPPPGPSGGHEPPPAAPPGGSGYAPPPPPSSGSGYPPPPPPPGGGAYPPPPPSAGGYAPPPPGPAIRTMPTESYTPWITRVLAAFIDWAPYVVLVGIGWVIMLVTQTSSCVTSISEYDVGQFCVSQPSMIGQLVQWLLSVGGLAYLVWNYGYRQGTIGSSIGKSVLKFKVVSETTGQPIGFGMSVVRQLAHFIDAIICFVGFLFPLWDAKRQTLADKIMTTVCVPI.

2 stretches are compositionally biased toward pro residues: residues 1–31 (MTEQ…PAAP) and 38–78 (APPP…PPGP). The tract at residues 1 to 78 (MTEQPPPGGS…GGYAPPPPGP (78 aa)) is disordered. One can recognise an RDD domain in the interval 89–233 (TPWITRVLAA…KRQTLADKIM (145 aa)). The next 3 membrane-spanning stretches (helical) occupy residues 98 to 118 (AFID…IMLV), 142 to 162 (SMIG…YLVW), and 203 to 223 (LAHF…LWDA).

This sequence belongs to the mycobacterial Pra family.

Its subcellular location is the cell membrane. This is Proline-rich antigen homolog from Mycobacterium tuberculosis (strain CDC 1551 / Oshkosh).